Reading from the N-terminus, the 124-residue chain is Protein RibT (124 aa).

The region spanning 3–124 (IRYKKSFEKI…QQDQDISYNN (122 aa)) is the N-acetyltransferase domain.

Involved in riboflavin biosynthesis. This Bacillus subtilis (strain 168) protein is Protein RibT (ribT).